A 51-amino-acid chain; its full sequence is Large ribosomal subunit protein bL33 (51 aa).

The protein belongs to the bacterial ribosomal protein bL33 family.

The sequence is that of Large ribosomal subunit protein bL33 from Pseudoalteromonas atlantica (strain T6c / ATCC BAA-1087).